The following is a 239-amino-acid chain: 2,3,4,5-tetrahydropyridine-2,6-dicarboxylate N-acetyltransferase (239 aa).

The protein belongs to the transferase hexapeptide repeat family. DapH subfamily.

The catalysed reaction is (S)-2,3,4,5-tetrahydrodipicolinate + acetyl-CoA + H2O = L-2-acetamido-6-oxoheptanedioate + CoA. The protein operates within amino-acid biosynthesis; L-lysine biosynthesis via DAP pathway; LL-2,6-diaminopimelate from (S)-tetrahydrodipicolinate (acetylase route): step 1/3. Its function is as follows. Catalyzes the transfer of an acetyl group from acetyl-CoA to tetrahydrodipicolinate. This is 2,3,4,5-tetrahydropyridine-2,6-dicarboxylate N-acetyltransferase from Staphylococcus aureus (strain bovine RF122 / ET3-1).